We begin with the raw amino-acid sequence, 41 residues long: Photosystem I reaction center subunit IX (41 aa).

A helical transmembrane segment spans residues 7-27; sequence YLSTAPVLATVWMIITAGILI.

The protein belongs to the PsaJ family.

It localises to the cellular thylakoid membrane. In terms of biological role, may help in the organization of the PsaE and PsaF subunits. The protein is Photosystem I reaction center subunit IX of Trichodesmium erythraeum (strain IMS101).